We begin with the raw amino-acid sequence, 631 residues long: Probable glutamate--tRNA ligase, cytoplasmic (631 aa).

An L-glutamate-binding site is contributed by 139–141 (RFP). The 'HIGH' region motif lies at 144–153 (PSGFLHIGHI). An ATP-binding site is contributed by His149. L-glutamate-binding positions include Asp173, 311–315 (YDFAC), and Arg329. Residues Glu332 and 367-371 (VLSKR) each bind ATP. The 'KMSKS' region motif lies at 367 to 371 (VLSKR).

This sequence belongs to the class-I aminoacyl-tRNA synthetase family. Glutamate--tRNA ligase type 2 subfamily.

Its subcellular location is the cytoplasm. It catalyses the reaction tRNA(Glu) + L-glutamate + ATP = L-glutamyl-tRNA(Glu) + AMP + diphosphate. The chain is Probable glutamate--tRNA ligase, cytoplasmic from Enterocytozoon bieneusi (strain H348) (Microsporidian parasite).